Reading from the N-terminus, the 397-residue chain is MPDWLSALLITLLKAVLVALALLTAFAYMTLIERRLLGRIQLRPGPNRVGPMGLLQPLADAIKSIFKEDVTVTLADKLVYTLAPILAIGMALTAFGGIPAGPPGSLFGTDPWVYNLDAGILALLALTSMGVYGIFLGGWASGSKYPMLGSLRSSAQMISYELGMGLSVLGLLMLVGSTNFLDIVEWQAGPRGHGWLILFQVFAFALFMVSSFAEVNRTPFDLPEAEQELVAGYLTEYSSIKWALFQMAEYVNIMTASALMSTLFFGGYRGPTFLEPLIPGISSWPLVWLIAKIAFFMFLFIWVRATLPRLRYDQLMRLGWKLTLPLALVNTLVVAAVLAFVPAEGLFGIPRLWLLGAVSLLLLLILFAASDAVRGLWNSPALRNEEKRVPGRPLGGD.

The next 9 helical transmembrane spans lie at 7-27 (ALLI…TAFA), 78-98 (LVYT…FGGI), 120-140 (ILAL…GGWA), 164-184 (MGLS…LDIV), 195-215 (WLIL…FAEV), 247-267 (MAEY…FFGG), 283-303 (SWPL…FIWV), 322-342 (LTLP…AFVP), and 353-373 (WLLG…SDAV).

Belongs to the complex I subunit 1 family. NDH-1 is composed of 15 different subunits. Subunits NuoA, H, J, K, L, M, N constitute the membrane sector of the complex.

The protein localises to the cell membrane. The enzyme catalyses a quinone + NADH + 5 H(+)(in) = a quinol + NAD(+) + 4 H(+)(out). Its function is as follows. NDH-1 shuttles electrons from NADH, via FMN and iron-sulfur (Fe-S) centers, to quinones in the respiratory chain. The immediate electron acceptor for the enzyme in this species is believed to be ubiquinone. Couples the redox reaction to proton translocation (for every two electrons transferred, four hydrogen ions are translocated across the cytoplasmic membrane), and thus conserves the redox energy in a proton gradient. This subunit may bind ubiquinone. This chain is NADH-quinone oxidoreductase subunit H, found in Deinococcus radiodurans (strain ATCC 13939 / DSM 20539 / JCM 16871 / CCUG 27074 / LMG 4051 / NBRC 15346 / NCIMB 9279 / VKM B-1422 / R1).